A 349-amino-acid chain; its full sequence is tRNA-specific 2-thiouridylase MnmA (349 aa).

Residues 7–14 and leucine 33 contribute to the ATP site; that span reads GLSGGVDS. The active-site Nucleophile is cysteine 94. Cysteine 94 and cysteine 193 are oxidised to a cystine. Glycine 119 serves as a coordination point for ATP. The interval 143 to 145 is interaction with tRNA; the sequence is KDQ. The active-site Cysteine persulfide intermediate is the cysteine 193. Residues 298–299 are interaction with tRNA; it reads RY.

It belongs to the MnmA/TRMU family.

It localises to the cytoplasm. It catalyses the reaction S-sulfanyl-L-cysteinyl-[protein] + uridine(34) in tRNA + AH2 + ATP = 2-thiouridine(34) in tRNA + L-cysteinyl-[protein] + A + AMP + diphosphate + H(+). In terms of biological role, catalyzes the 2-thiolation of uridine at the wobble position (U34) of tRNA, leading to the formation of s(2)U34. This chain is tRNA-specific 2-thiouridylase MnmA, found in Gloeothece citriformis (strain PCC 7424) (Cyanothece sp. (strain PCC 7424)).